Here is a 184-residue protein sequence, read N- to C-terminus: Photosystem I assembly protein Ycf4 (184 aa).

2 consecutive transmembrane segments (helical) span residues Phe-22–Ser-42 and Ile-57–Ser-77.

It belongs to the Ycf4 family.

It is found in the plastid. The protein localises to the chloroplast thylakoid membrane. Seems to be required for the assembly of the photosystem I complex. The polypeptide is Photosystem I assembly protein Ycf4 (Capsella bursa-pastoris (Shepherd's purse)).